Consider the following 59-residue polypeptide: Movement protein TGBp3 (59 aa).

The Lumenal segment spans residues 1–3 (MHL). A helical membrane pass occupies residues 4–21 (AIVGALTLVLTLFVLHYT). At 22-59 (TKDDRCYILINGHSAFTNCPASPDLAKVISQLKPHNHG) the chain is on the cytoplasmic side.

Belongs to the Tymovirales TGBp3 protein family.

The protein localises to the host endoplasmic reticulum membrane. Its function is as follows. Plays a role in viral cell-to-cell propagation, by facilitating genome transport to neighboring plant cells through plasmosdesmata. May induce the formation of granular vesicles derived from the Endoplasmic reticulum, which align on actin filaments. In Chenopodium album (Fat hen), this protein is Movement protein TGBp3.